The sequence spans 565 residues: Dihydroxy-acid dehydratase (565 aa).

Asp-80 is a Mg(2+) binding site. Cys-121 provides a ligand contact to [2Fe-2S] cluster. Positions 122 and 123 each coordinate Mg(2+). Lys-123 bears the N6-carboxylysine mark. Cys-194 is a [2Fe-2S] cluster binding site. Position 447 (Glu-447) interacts with Mg(2+). Residue Ser-473 is the Proton acceptor of the active site.

The protein belongs to the IlvD/Edd family. Homodimer. Requires [2Fe-2S] cluster as cofactor. It depends on Mg(2+) as a cofactor.

It catalyses the reaction (2R)-2,3-dihydroxy-3-methylbutanoate = 3-methyl-2-oxobutanoate + H2O. The catalysed reaction is (2R,3R)-2,3-dihydroxy-3-methylpentanoate = (S)-3-methyl-2-oxopentanoate + H2O. Its pathway is amino-acid biosynthesis; L-isoleucine biosynthesis; L-isoleucine from 2-oxobutanoate: step 3/4. The protein operates within amino-acid biosynthesis; L-valine biosynthesis; L-valine from pyruvate: step 3/4. Its function is as follows. Functions in the biosynthesis of branched-chain amino acids. Catalyzes the dehydration of (2R,3R)-2,3-dihydroxy-3-methylpentanoate (2,3-dihydroxy-3-methylvalerate) into 2-oxo-3-methylpentanoate (2-oxo-3-methylvalerate) and of (2R)-2,3-dihydroxy-3-methylbutanoate (2,3-dihydroxyisovalerate) into 2-oxo-3-methylbutanoate (2-oxoisovalerate), the penultimate precursor to L-isoleucine and L-valine, respectively. The chain is Dihydroxy-acid dehydratase from Chlorobium luteolum (strain DSM 273 / BCRC 81028 / 2530) (Pelodictyon luteolum).